The primary structure comprises 184 residues: Major fimbrial subunit (184 aa).

A signal peptide spans 1 to 22; that stretch reads MKLSKIALAAALVFGINSVATA. The cysteines at positions 49 and 88 are disulfide-linked.

This sequence belongs to the fimbrial protein family.

The protein resides in the fimbrium. Major structural component of PMF fimbriae. In Proteus mirabilis (strain HI4320), this protein is Major fimbrial subunit (pmfA).